The following is a 594-amino-acid chain: E3 ubiquitin-protein ligase TRAF7 (594 aa).

The tract at residues 1–33 is disordered; the sequence is MPPINTPRRSDSAISVRSLHSESSMSLRSTFSL. Ser12 and Ser15 each carry phosphoserine. A compositionally biased stretch (low complexity) spans 15–29; it reads SVRSLHSESSMSLRS. The RING-type zinc finger occupies 55–89; that stretch reads CQLCCSVFKDPVITTCGHTFCRRCALKSEKCPVDN. Residues 146 to 216 form a TRAF-type zinc finger; that stretch reads HESSCDYRPV…RFEGLKEFLQ (71 aa). WD repeat units follow at residues 318–357, 361–398, 401–437, 439–478, 481–518, 521–562, and 565–593; these read GHQGPVWCLCVYSMGDLLFSGSSDKTIKVWDTCTTYKCQK, GHDGIVLALCIQGCKLYSGSADCTIIVWDIQNLQKVNT, AHDNPVCTLVSSHNMLFSGSLKAIKVWDIVGTELKLK, ELTGLNHWVRALVAAQSYLYSGSYQTIKIWDIRTLDCIHV, TSGGSVYSIAVTNHHIVCGTYENLIHVWDIESKEQVRT, GHVG…CTQT, and RHQGSVTALAVSRGRLFSGAVDSTVKVWT.

It belongs to the WD repeat TRAF7 family. As to quaternary structure, homodimer. Interacts with MAP3K3 and promotes the kinase activity of this enzyme. Post-translationally, phosphorylated by MAP3K3. In terms of processing, ubiquitinates itself upon phosphorylation. As to expression, ubiquitously expressed. Expression is relatively high in heart, liver, kidney, testis, prostate, thyroid, and salivary gland.

The protein localises to the cytoplasmic vesicle. The protein resides in the cytoplasm. Its subcellular location is the nucleus. It catalyses the reaction S-ubiquitinyl-[E2 ubiquitin-conjugating enzyme]-L-cysteine + [acceptor protein]-L-lysine = [E2 ubiquitin-conjugating enzyme]-L-cysteine + N(6)-ubiquitinyl-[acceptor protein]-L-lysine.. It participates in protein modification; protein ubiquitination. Functionally, E3 ubiquitin and SUMO-protein ligase that plays a role in different biological processes such as innate immunity, inflammation or apoptosis. Potentiates MAP3K3-mediated activation of the NF-kappa-B, JUN/AP1 and DDIT3 transcriptional regulators. Negatively regulates MYB transcriptional activity by sequestering it to the cytosol via SUMOylation. Plays a role in the phosphorylation of MAPK1 and/or MAPK3, probably via its interaction with MAP3K3. Negatively regulates RLR-mediated innate immunity by promoting 'Lys-48'-linked ubiquitination of TBK1 through its RING domain to inhibit the cellular antiviral response. Promotes 'Lys-29'-linked polyubiquitination of NEMO/IKBKG and RELA leading to targeting these two proteins to lysosomal degradative pathways, reducing the transcriptional activity of NF-kappa-B. This Mus musculus (Mouse) protein is E3 ubiquitin-protein ligase TRAF7.